The primary structure comprises 485 residues: Ribulose bisphosphate carboxylase large chain 2 (485 aa).

Residues Asn125 and Thr175 each coordinate substrate. Lys177 serves as the catalytic Proton acceptor. Residue Lys179 participates in substrate binding. Mg(2+)-binding residues include Lys203, Asp205, and Glu206. Lys203 carries the N6-carboxylysine modification. The active-site Proton acceptor is His295. Substrate-binding residues include Arg296, His328, and Ser380.

The protein belongs to the RuBisCO large chain family. Type I subfamily. As to quaternary structure, heterohexadecamer of 8 large chains and 8 small chains. Mg(2+) serves as cofactor.

The catalysed reaction is 2 (2R)-3-phosphoglycerate + 2 H(+) = D-ribulose 1,5-bisphosphate + CO2 + H2O. The enzyme catalyses D-ribulose 1,5-bisphosphate + O2 = 2-phosphoglycolate + (2R)-3-phosphoglycerate + 2 H(+). In terms of biological role, ruBisCO catalyzes two reactions: the carboxylation of D-ribulose 1,5-bisphosphate, the primary event in carbon dioxide fixation, as well as the oxidative fragmentation of the pentose substrate. Both reactions occur simultaneously and in competition at the same active site. The polypeptide is Ribulose bisphosphate carboxylase large chain 2 (Methylibium petroleiphilum (strain ATCC BAA-1232 / LMG 22953 / PM1)).